Reading from the N-terminus, the 141-residue chain is ATP synthase epsilon chain (141 aa).

The protein belongs to the ATPase epsilon chain family. As to quaternary structure, F-type ATPases have 2 components, CF(1) - the catalytic core - and CF(0) - the membrane proton channel. CF(1) has five subunits: alpha(3), beta(3), gamma(1), delta(1), epsilon(1). CF(0) has three main subunits: a, b and c.

The protein resides in the cell membrane. In terms of biological role, produces ATP from ADP in the presence of a proton gradient across the membrane. In Lactococcus lactis subsp. cremoris (strain MG1363), this protein is ATP synthase epsilon chain.